The sequence spans 181 residues: Transcription termination/antitermination protein NusG (181 aa).

The region spanning 130-161 is the KOW domain; it reads PGEMVRVNDGPFADFNGVVEEVDYEKSRLKVS.

The protein belongs to the NusG family. Monomer. Interacts with the transcription termination factor Rho and with RNA polymerase.

In terms of biological role, participates in transcription elongation, termination and antitermination. In the absence of Rho, increases the rate of transcription elongation by the RNA polymerase (RNAP), probably by partially suppressing pausing. In the presence of Rho, modulates most Rho-dependent termination events by interacting with the RNAP to render the complex more susceptible to the termination activity of Rho. May be required to overcome a kinetic limitation of Rho to function at certain terminators. Also involved in ribosomal RNA transcriptional antitermination. In Salmonella typhi, this protein is Transcription termination/antitermination protein NusG.